The sequence spans 547 residues: Heme-binding protein A (547 aa).

Residues 1-18 (MKLKATLTLAAATLVLAA) form the signal peptide. Cysteine 19 is lipidated: N-palmitoyl cysteine. Cysteine 19 carries the S-diacylglycerol cysteine lipid modification.

The protein belongs to the bacterial solute-binding protein 5 family.

It localises to the cell inner membrane. Its function is as follows. Important role in heme acquisition or metabolism. The sequence is that of Heme-binding protein A (hbpA) from Haemophilus influenzae (strain ATCC 51907 / DSM 11121 / KW20 / Rd).